A 1580-amino-acid chain; its full sequence is MEAQSHSSTTTEKKKVENSIVKCSTRTDVSEKAVASSTTSNEDESPGQTYHRERRNAITMQPQNVQGLSKVSEEPSTSSDERASLIKKEIHGSLPHVAEPSVPYRGTVFAMDPRNGYMEPHYHPPHLFPAFHPPVPIDARHHEGRYHYDPSPIPPLHMTSALSSSPTYPDLPFIRISPHRNPAAASESPFSPPHPYINPYMDYIRSLHSSPSLSMISATRGLSPTDAPHAGVSPAEYYHQMALLTGQRSPYADIIPSAATAGTGAIHMEYLHAMDSTRFPSPRLSARPSRKRTLSISPLSDHSFDLQTMIRTSPNSLVTILNNSRSSSSASGSYGHLSASAISPALSFTYSSAPVSLHMHQQILSRQQSLGSAFGHSPPLIHPAPTFPTQRPIPGIPTVLNPVQVSSGPSESSQNKPTSESAVSSTGDPMHNKRSKIKPDEDLPSPGARGQQEQPEGTTLVKEEGDKDESKQEPEVIYETNCHWEGCAREFDTQEQLVHHINNDHIHGEKKEFVCRWLDCSREQKPFKAQYMLVVHMRRHTGEKPHKCTFEGCTKAYSRLENLKTHLRSHTGEKPYVCEHEGCNKAFSNASDRAKHQNRTHSNEKPYVCKIPGCTKRYTDPSSLRKHVKTVHGPEAHVTKKQRGDIHPRPPPPRDSGSHSQSRSPGRPTQGALGEQQDLSNTTSKREECLQVKTVKAEKPMTSQPSPGGQSSCSSQQSPISNYSNSGLELPLTDGGSIGDLSAIDETPIMDSTISTATTALALQARRNPAGTKWMEHVKLERLKQVNGMFPRLNPILPPKAPAVSPLIGNGTQSNNTCSLGGPMTLLPGRSDLSGVDVTMLNMLNRRDSSASTISSAYLSSRRSSGISPCFSSRRSSEASQAEGRPQNVSVADSYDPISTDASRRSSEASQSDGLPSLLSLTPAQQYRLKAKYAAATGGPPPTPLPNMERMSLKTRLALLGDALEPGVALPPVHAPRRCSDGGAHGYGRRHLQPHDAPGHGVRRASDPVRTGSEGLALPRVPRFSSLSSCNPPAMATSAEKRSLVLQNYTRPEGGQSRNFHSSPCPPSITENVTLESLTMDADANLNDEDFLPDDVVQYLNSQNQAGYEQHFPSTLPDDSKVPHGPGDFDAPGLPDSHAGQQFHALEQPCPEGSKTDLPIQWNEVSSGSADLSSSKLKCGPRPAVPQTRAFGFCNGMVVHPQNPLRSGPAGGYQTLGENSNPYGGPEHLMLHNSPGSGTSGNAFHEQPCKAPQYGNCLNRQPVAPGALDGACGAGIQASKLKSTPMQGSGGQLNFGLPVAPNESAGSMVNGMQNQDPVGQGYLAHQLLGDSMQHPGAGRPGQQMLGQISATSHINIYQGPESCLPGAHGMGSQPSSLAVVRGYQPCASFGGSRRQAMPRDSLALQSGQLSDTSQTCRVNGIKMEMKGQPHPLCSNLQNYSGQFYDQTVGFSQQDTKAGSFSISDASCLLQGTSAKNSELLSPGANQVTSTVDSLDSHDLEGVQIDFDAIIDDGDHSSLMSGALSPSIIQNLSYSSSRLTTPRASLPFPALSMSTTNMAIGDMSSLLTSLAEESKFLAVMQ.

At Met-1 the chain carries N-acetylmethionine. 2 stretches are compositionally biased toward polar residues: residues Met-1–Thr-10 and Ile-58–Ser-78. The segment at Met-1–Ser-79 is disordered. Arg-175 is subject to Omega-N-methylarginine. Residues Gln-368–Glu-475 form a disordered region. A compositionally biased stretch (polar residues) spans Asn-401 to Gly-427. Glycyl lysine isopeptide (Lys-Gly) (interchain with G-Cter in SUMO2) cross-links involve residues Lys-438 and Lys-462. Positions Val-461 to Pro-474 are enriched in basic and acidic residues. 5 consecutive C2H2-type zinc fingers follow at residues Thr-480–His-505, Phe-513–His-540, His-546–His-570, Tyr-576–His-601, and Tyr-607–His-632. The disordered stretch occupies residues Asp-620 to Leu-728. The segment covering His-632–Pro-648 has biased composition (basic and acidic residues). Ser-664 is modified (phosphoserine). The segment covering Ser-684–Lys-699 has biased composition (basic and acidic residues). A compositionally biased stretch (low complexity) spans Ser-703–Ser-726. A mediates interaction with DZIP1 region spans residues Asp-745–Asn-845. Lys-773 is covalently cross-linked (Glycyl lysine isopeptide (Lys-Gly) (interchain with G-Cter in ubiquitin)). Residue Lys-779 forms a Glycyl lysine isopeptide (Lys-Gly) (interchain with G-Cter in SUMO2); alternate linkage. A Glycyl lysine isopeptide (Lys-Gly) (interchain with G-Cter in ubiquitin); alternate cross-link involves residue Lys-779. Glycyl lysine isopeptide (Lys-Gly) (interchain with G-Cter in ubiquitin) cross-links involve residues Lys-784 and Lys-800. Residues Ser-849, Ser-865, Ser-877, and Ser-907 each carry the phosphoserine; by PKA modification. The span at Arg-863–Ala-882 shows a compositional bias: low complexity. Residues Arg-863 to Leu-918 form a disordered region. The segment covering Glu-908–Leu-918 has biased composition (polar residues). A phosphoserine; by PKA mark is found at Ser-980 and Ser-1006. Residues Asp-981–Arg-1042 are disordered.

This sequence belongs to the GLI C2H2-type zinc-finger protein family. In terms of assembly, the full-length GLI3 form (GLI3FL) interacts with SUFU and this interaction regulates the formation of either repressor or activator forms of GLI3. Its association with SUFU is regulated by Hh signaling and dissociation of the SUFU-GLI3 interaction requires the presence of the ciliary motor KIF3A. Interacts with KIF7. The activator form of GLI3 (GLI3A) but not the repressor form (GLI3R) can interact with TRPS1. The phosphorylated form interacts with BTRC. Interacts with ZIC1. Interacts with ZIC3 (via C2H2-type domains 3, 4 and 5); the interaction enhances its transcriptional activity. Interacts with WRD11; the interaction associates EMX1 with GLI3. Interacts with DZIP1; retains GLI3 within the cytoplasm. In terms of processing, phosphorylated on multiple sites by protein kinase A (PKA) and phosphorylation by PKA primes further phosphorylation by CK1 and GSK3. Phosphorylated by DYRK2 (in vitro). Phosphorylation is essential for its proteolytic processing. Transcriptional repressor GLI3R, a C-terminally truncated form, is generated from the full-length GLI3 protein (GLI3FL/GLI3-190) through proteolytic processing. This process requires PKA-primed phosphorylation of GLI3, ubiquitination of GLI3 and the presence of BTRC. GLI3FL is complexed with SUFU in the cytoplasm and is maintained in a neutral state. Without the Hh signal, the SUFU-GLI3 complex is recruited to cilia, leading to the efficient processing of GLI3FL into GLI3R. GLI3R formation leads to its dissociation from SUFU, allowing it to translocate into the nucleus, and repress Hh target genes. When Hh signaling is initiated, SUFU dissociates from GLI3FL and this has two consequences. First, GLI3R production is halted. Second, free GLI3FL translocates to the nucleus, where it is phosphorylated, destabilized, and converted to a transcriptional activator (GLI3A). Phosphorylated in vitro by ULK3.

It localises to the nucleus. Its subcellular location is the cytoplasm. The protein localises to the cell projection. It is found in the cilium. Functionally, has a dual function as a transcriptional activator and a repressor of the sonic hedgehog (Shh) pathway, and plays a role in limb development. The full-length GLI3 form (GLI3FL) after phosphorylation and nuclear translocation, acts as an activator (GLI3A) while GLI3R, its C-terminally truncated form, acts as a repressor. A proper balance between the GLI3 activator and the repressor GLI3R, rather than the repressor gradient itself or the activator/repressor ratio gradient, specifies limb digit number and identity. In concert with TRPS1, plays a role in regulating the size of the zone of distal chondrocytes, in restricting the zone of PTHLH expression in distal cells and in activating chondrocyte proliferation. Binds to the minimal GLI-consensus sequence 5'-GGGTGGTC-3'. Plays a role in limb and brain development. The chain is Transcriptional activator GLI3 (GLI3) from Pan troglodytes (Chimpanzee).